Reading from the N-terminus, the 389-residue chain is Leucine aminopeptidase 1 (389 aa).

Positions 1–18 (MKSAALLLPLYAAAFAAA) are cleaved as a signal peptide. Residues 19–89 (AFHHEHAQAV…TLKRRINAAS (71 aa)) constitute a propeptide that is removed on maturation. Asn99 carries N-linked (GlcNAc...) asparagine glycosylation. 4 residues coordinate Zn(2+): His188, Asp207, Glu246, and Asp273. A disulfide bridge connects residues Cys322 and Cys326. His355 contributes to the Zn(2+) binding site.

The protein belongs to the peptidase M28 family. M28E subfamily. Monomer. Requires Zn(2+) as cofactor.

Its subcellular location is the secreted. In terms of biological role, extracellular aminopeptidase that allows assimilation of proteinaceous substrates. This Pyrenophora teres f. teres (strain 0-1) (Barley net blotch fungus) protein is Leucine aminopeptidase 1 (lap1).